The following is a 185-amino-acid chain: Large ribosomal subunit protein uL5 (185 aa).

It belongs to the universal ribosomal protein uL5 family. In terms of assembly, part of the 50S ribosomal subunit; contacts the 5S rRNA and probably tRNA. Forms a bridge to the 30S subunit in the 70S ribosome.

Its function is as follows. This is one of the proteins that bind and probably mediate the attachment of the 5S RNA into the large ribosomal subunit, where it forms part of the central protuberance. In the 70S ribosome it contacts protein S13 of the 30S subunit (bridge B1b), connecting the 2 subunits; this bridge is implicated in subunit movement. May contact the P site tRNA; the 5S rRNA and some of its associated proteins might help stabilize positioning of ribosome-bound tRNAs. The chain is Large ribosomal subunit protein uL5 from Haloquadratum walsbyi (strain DSM 16790 / HBSQ001).